A 338-amino-acid chain; its full sequence is Holliday junction branch migration complex subunit RuvB (338 aa).

Residues 1–181 (MEERILTQNF…FGVINRLDYY (181 aa)) form a large ATPase domain (RuvB-L) region. ATP is bound by residues leucine 20, arginine 21, glycine 62, lysine 65, threonine 66, threonine 67, 128–130 (EDF), arginine 171, tyrosine 181, and arginine 218. Threonine 66 provides a ligand contact to Mg(2+). The segment at 182–252 (SVEELKEIIK…TSKEALDVLG (71 aa)) is small ATPAse domain (RuvB-S). Positions 255 to 338 (EIGLEYIDRK…YIEQGRIEGV (84 aa)) are head domain (RuvB-H). The DNA site is built by arginine 310 and arginine 315.

It belongs to the RuvB family. As to quaternary structure, homohexamer. Forms an RuvA(8)-RuvB(12)-Holliday junction (HJ) complex. HJ DNA is sandwiched between 2 RuvA tetramers; dsDNA enters through RuvA and exits via RuvB. An RuvB hexamer assembles on each DNA strand where it exits the tetramer. Each RuvB hexamer is contacted by two RuvA subunits (via domain III) on 2 adjacent RuvB subunits; this complex drives branch migration. In the full resolvosome a probable DNA-RuvA(4)-RuvB(12)-RuvC(2) complex forms which resolves the HJ.

It is found in the cytoplasm. The enzyme catalyses ATP + H2O = ADP + phosphate + H(+). In terms of biological role, the RuvA-RuvB-RuvC complex processes Holliday junction (HJ) DNA during genetic recombination and DNA repair, while the RuvA-RuvB complex plays an important role in the rescue of blocked DNA replication forks via replication fork reversal (RFR). RuvA specifically binds to HJ cruciform DNA, conferring on it an open structure. The RuvB hexamer acts as an ATP-dependent pump, pulling dsDNA into and through the RuvAB complex. RuvB forms 2 homohexamers on either side of HJ DNA bound by 1 or 2 RuvA tetramers; 4 subunits per hexamer contact DNA at a time. Coordinated motions by a converter formed by DNA-disengaged RuvB subunits stimulates ATP hydrolysis and nucleotide exchange. Immobilization of the converter enables RuvB to convert the ATP-contained energy into a lever motion, pulling 2 nucleotides of DNA out of the RuvA tetramer per ATP hydrolyzed, thus driving DNA branch migration. The RuvB motors rotate together with the DNA substrate, which together with the progressing nucleotide cycle form the mechanistic basis for DNA recombination by continuous HJ branch migration. Branch migration allows RuvC to scan DNA until it finds its consensus sequence, where it cleaves and resolves cruciform DNA. The protein is Holliday junction branch migration complex subunit RuvB of Thermoanaerobacter pseudethanolicus (strain ATCC 33223 / 39E) (Clostridium thermohydrosulfuricum).